The chain runs to 89 residues: Envelope protein US9 (89 aa).

Basic and acidic residues predominate over residues 1 to 10 (MTSRPADQDS). A disordered region spans residues 1-21 (MTSRPADQDSVRSSASVPLYP). Residues 1–66 (MTSRPADQDS…RRRRTRCVGL (66 aa)) lie on the Intravirion side of the membrane. The Internalization motif motif lies at 20-23 (YPAA). The segment at 29-38 (EAYYSESEDE) is acidic. S33 and S35 each carry phosphoserine; by host CK2. A helical; Signal-anchor for type II membrane protein transmembrane segment spans residues 67 to 87 (VIACLVVALLSGGFGALLVWL). Topologically, residues 88–89 (LR) are virion surface.

Belongs to the alphaherpesvirinae envelope protein US9 family. Phosphorylated on serines within the acidic cluster, possibly by host CK2. Phosphorylation determines whether endocytosed viral US9 traffics to the trans-Golgi network or recycles to the cell membrane.

Its subcellular location is the virion membrane. It localises to the host Golgi apparatus membrane. The protein localises to the host smooth endoplasmic reticulum membrane. The protein resides in the host cell membrane. Functionally, essential for the anterograde spread of the infection throughout the host nervous system. Together with the gE/gI heterodimer, US9 is involved in the sorting and transport of viral structural components toward axon tips. The protein is Envelope protein US9 of Homo sapiens (Human).